We begin with the raw amino-acid sequence, 467 residues long: Peptidoglycan-N-acetylmuramic acid deacetylase PdaC (467 aa).

A helical membrane pass occupies residues isoleucine 6 to histidine 26. Residues lysine 278 to valine 452 enclose the NodB homology domain. Aspartate 285 serves as the catalytic Proton acceptor. A divalent metal cation-binding residues include aspartate 286, histidine 336, and histidine 340. The Proton donor role is filled by histidine 427.

It in the N-terminal section; belongs to the RsiV family. In the C-terminal section; belongs to the polysaccharide deacetylase family.

Its subcellular location is the cell membrane. Its activity is regulated as follows. Activated by divalent metal cations; Mn(2+) is the most efficient, followed by Ca(2+) and Mg(2+). In contrast to PgdA from S.pneumoniae, these ions are not absolutely required for deacetylase activity. Catalyzes the deacetylation of N-acetylmuramic acid (MurNAc) residues in peptidoglycan, a modification that confers resistance to lysosyme. Is not able to deacetylate N-acetylglucosamine (GlcNAc) residues in peptidoglycan, but can deacylate chitin oligomers such as GlcNAc4 and GlcNAc5. Is essentially not active toward chitosan (partially deacetylated GlcNAc polymer) and has very low activity toward chitin (GlcNAc polymer). Does not deacetylate GlcNAc. This chain is Peptidoglycan-N-acetylmuramic acid deacetylase PdaC (pdaC), found in Bacillus subtilis (strain 168).